The chain runs to 198 residues: Probable GTP-binding protein EngB (198 aa).

The 176-residue stretch at 22-197 (TLPEYAFIGR…LDYIEGINNS (176 aa)) folds into the EngB-type G domain. GTP-binding positions include 30–37 (GRSNVGKS), 57–61 (GKTQL), 75–78 (DLPG), 142–145 (TKAD), and 175–178 (ITSA). Residues S37 and T59 each contribute to the Mg(2+) site.

Belongs to the TRAFAC class TrmE-Era-EngA-EngB-Septin-like GTPase superfamily. EngB GTPase family. Requires Mg(2+) as cofactor.

Necessary for normal cell division and for the maintenance of normal septation. The polypeptide is Probable GTP-binding protein EngB (Christiangramia forsetii (strain DSM 17595 / CGMCC 1.15422 / KT0803) (Gramella forsetii)).